The sequence spans 589 residues: WD repeat-containing protein 26 homolog (589 aa).

The segment at 1-57 (MGVVEDTEPPLKRAKRLADEPNGFSANSSVRGSSVNSNSLGDLMARPLPSQGDDETI) is disordered. Low complexity predominate over residues 25–39 (SANSSVRGSSVNSNS). The LisH domain occupies 64-96 (RKSEFVRIITRALYSLGYDKTGAMLEEESGISL). Positions 97-154 (HNSTIKLFLQQVKDGKWDQSVKTLHRIGFPDEKAVKAASFLLLEQKFLEFLKVEKIAD) constitute a CTLH domain. WD repeat units follow at residues 272–311 (SHTD…HISL), 317–358 (GHHK…HMYE), 360–398 (GGIS…KECW), 401–440 (QRTQ…ERLI), 442–480 (EEDM…KIVS), 484–526 (GHKR…LIVE), and 529–569 (GHAG…QQNQ).

Interacts with RANBPM. As to expression, expressed in roots, leaves and flowers.

The protein localises to the cytoplasm. Its function is as follows. Acts as a component involved in the crosstalk regulation between light, hormone and abiotic stress response. The sequence is that of WD repeat-containing protein 26 homolog from Arabidopsis thaliana (Mouse-ear cress).